A 546-amino-acid polypeptide reads, in one-letter code: Cytochrome P450 monooxygenase fumoB (546 aa).

The helical transmembrane segment at 13–33 threads the bilayer; it reads LGYYEKLAGILGIIGLVLLFW. A glycan (N-linked (GlcNAc...) asparagine) is linked at asparagine 147. A heme-binding site is contributed by cysteine 488.

This sequence belongs to the cytochrome P450 family. It depends on heme as a cofactor.

It localises to the membrane. It functions in the pathway secondary metabolite biosynthesis. Its function is as follows. Cytochrome P450 monooxygenase; part of the gene cluster that mediates the biosynthesis of fumosorinone, a 2-pyridone alkaloid that acts as an inhibitor of protein tyrosine phosphatase 1B which is implicated asa negative regulator of insulin receptor signaling and a potential drug target for the treatment of type II diabetes and other associated metabolic syndromes. The polyketide-amino acid backbone of fumosorinone is first assembled by the PKS-NRPS hybrid fumoS. The PKS modules condense one acetyl-CoA starter unit with 7 malonyl-CoA units, programmed C-methylations occurring after the first 3 and the sixth extensions, and cycles of full reduction occurring after the first 2 extensions. Because fumoS lacks a designated enoyl reductase (ER) domain, the required activity is provided the enoyl reductase fumoC. Upon formation of the polyketide backbone on the thiotemplate, the polyketide is transferred to the NRPS module and linked to tyrosine to produce the acyltetramic acid intermediate called prefumosorinone A. The cytochrome P450 monooxygenase fumoA then probably catalyzes an unprecedented oxidative ring expansion of prefumosorinone A to form prefumosorinone B which contains the 2-pyridone core of fumosorinone. The cytochrome P450 monooxygenase fumoB might hydroxylate the nitrogen of prefumosorinone B, but not the acyltetramic acid prefumosorinone A, to form fumosorinone. The protein is Cytochrome P450 monooxygenase fumoB of Cordyceps fumosorosea (strain ARSEF 2679) (Isaria fumosorosea).